The primary structure comprises 433 residues: Homogentisate 1,2-dioxygenase (433 aa).

The active-site Proton acceptor is the His-288. Fe cation is bound by residues His-331 and Glu-337. Homogentisate is bound by residues Tyr-346 and His-367. His-367 provides a ligand contact to Fe cation.

This sequence belongs to the homogentisate dioxygenase family. In terms of assembly, hexamer; dimer of trimers. The cofactor is Fe cation.

It carries out the reaction homogentisate + O2 = 4-maleylacetoacetate + H(+). It functions in the pathway amino-acid degradation; L-phenylalanine degradation; acetoacetate and fumarate from L-phenylalanine: step 4/6. In terms of biological role, involved in the catabolism of homogentisate (2,5-dihydroxyphenylacetate or 2,5-OH-PhAc), a central intermediate in the degradation of phenylalanine and tyrosine. Catalyzes the oxidative ring cleavage of the aromatic ring of homogentisate to yield maleylacetoacetate. This chain is Homogentisate 1,2-dioxygenase, found in Pseudomonas putida (strain GB-1).